The primary structure comprises 921 residues: Probable dipeptidyl-aminopeptidase B (921 aa).

The interval 1-33 (MAGHTEENAQLLSTEQESVSRHSSDSAASTAST) is disordered. The Cytoplasmic segment spans residues 1 to 109 (MAGHTEENAQ…NKSVDKKLRK (109 aa)). Residues 8 to 17 (NAQLLSTEQE) are compositionally biased toward polar residues. Residues 110–130 (LIWIVGGVFIGAWVLALFIFL) form a helical; Signal-anchor for type II membrane protein membrane-spanning segment. At 131–921 (GKQAYKHSSE…VPLQIDAAKV (791 aa)) the chain is on the vacuolar side. N-linked (GlcNAc...) asparagine glycosylation occurs at N362. The Charge relay system role is filled by S768. N822 carries an N-linked (GlcNAc...) asparagine glycan. Residues D845 and H878 each act as charge relay system in the active site.

This sequence belongs to the peptidase S9B family.

The protein resides in the vacuole membrane. It catalyses the reaction Release of an N-terminal dipeptide, Xaa-Yaa-|-Zaa-, from a polypeptide, preferentially when Yaa is Pro, provided Zaa is neither Pro nor hydroxyproline.. Functionally, type IV dipeptidyl-peptidase which removes N-terminal dipeptides sequentially from polypeptides having unsubstituted N-termini provided that the penultimate residue is proline. The sequence is that of Probable dipeptidyl-aminopeptidase B (dapB) from Sclerotinia sclerotiorum (strain ATCC 18683 / 1980 / Ss-1) (White mold).